The sequence spans 362 residues: 3-dehydroquinate synthase (362 aa).

NAD(+) is bound by residues 70 to 75 (DGEQYK), 104 to 108 (GVIGD), 128 to 129 (TT), Lys-141, and Lys-150. Zn(2+) is bound by residues Glu-183, His-246, and His-263.

The protein belongs to the sugar phosphate cyclases superfamily. Dehydroquinate synthase family. NAD(+) is required as a cofactor. It depends on Co(2+) as a cofactor. Zn(2+) serves as cofactor.

The protein resides in the cytoplasm. It catalyses the reaction 7-phospho-2-dehydro-3-deoxy-D-arabino-heptonate = 3-dehydroquinate + phosphate. Its pathway is metabolic intermediate biosynthesis; chorismate biosynthesis; chorismate from D-erythrose 4-phosphate and phosphoenolpyruvate: step 2/7. In terms of biological role, catalyzes the conversion of 3-deoxy-D-arabino-heptulosonate 7-phosphate (DAHP) to dehydroquinate (DHQ). This Pasteurella multocida (strain Pm70) protein is 3-dehydroquinate synthase.